The primary structure comprises 457 residues: Metacaspase-1 (457 aa).

The interval 1-149 (MSWNQYPGGG…PQLQGQGGQS (149 aa)) is disordered. Positions 7–18 (PGGGHHQQGGYG) are enriched in gly residues. The segment covering 20 to 56 (RPPPPQWAQQGPPPPPNMGYRPPPPPQAYYNNPPPPQ) has biased composition (pro residues). The span at 57–83 (QYQRPAPQQNGYQQGGYQQQQQSQGNY) shows a compositional bias: low complexity. Catalysis depends on residues H247 and C303.

This sequence belongs to the peptidase C14B family.

Its function is as follows. Involved in cell death (apoptosis). The sequence is that of Metacaspase-1 (MCA1) from Cryptococcus neoformans var. neoformans serotype D (strain JEC21 / ATCC MYA-565) (Filobasidiella neoformans).